The primary structure comprises 226 residues: E3 ubiquitin-protein ligase RNF186 (226 aa).

The RING-type zinc-finger motif lies at 39–85 (CLVCREPYNCARSPKLLSCQHTFCAVCLKLLLYVQEDTWSIPCPLCR). A run of 2 helical transmembrane segments spans residues 157 to 177 (HLLLLALVIVLILPFIYPGVI) and 179 to 199 (WVLAFVIALALLMSTLFCCHP).

In terms of assembly, interacts with BNIP1. Post-translationally, polyubiquitinated. 'Lys-29'-linked autoubiquitination leads to proteasomal degradation.

The protein localises to the endoplasmic reticulum membrane. It carries out the reaction S-ubiquitinyl-[E2 ubiquitin-conjugating enzyme]-L-cysteine + [acceptor protein]-L-lysine = [E2 ubiquitin-conjugating enzyme]-L-cysteine + N(6)-ubiquitinyl-[acceptor protein]-L-lysine.. The protein operates within protein modification; protein ubiquitination. In terms of biological role, E3 ubiquitin protein ligase that is part of an apoptotic signaling pathway activated by endoplasmic reticulum stress. Stimulates the expression of proteins specific of the unfolded protein response (UPR), ubiquitinates BNIP1 and regulates its localization to the mitochondrion and induces calcium release from the endoplasmic reticulum that ultimately leads to cell apoptosis. Plays a role in the maintenance of intestinal homeostasis and clearance of enteric pathogens. Upon NOD2 stimulation, ubiquitinates the ER stress sensor activating transcription factor 6/ATF6 and promotes the unfolded protein response UPR. Participates in basal level of autophagy maintenance by regulating the ubiquitination of EPHB2. Upon stimulation by ligand EFNB1, ubiquitinates EPHB2 and further recruits MAP1LC3B for autophagy induction. Controls nutrient sensing by ubiquitinating Sestrin-2/SESN2, which is an intracellular sensor of cytosolic leucine and inhibitor of mTORC1 activity. This chain is E3 ubiquitin-protein ligase RNF186, found in Mus musculus (Mouse).